We begin with the raw amino-acid sequence, 333 residues long: MATISSTLLLNSSRSALPLRFPKFSGFSSSSPFARSYRFGRRNLEPLSNGMLSSGSRADGATAAAASMEGVMTEAMKLIQSASPTWKSAVANNLLIFVLGSPLLVTGLSASGIAAAFLLGTLTWRAYGSAGFLLVAAYFVIGTAATKVKMTQKEAQGVAEKRKGRRGPRSVIGSSAAGCVCAFLSIYQVGGAAFSQLFRLGFVSSFCTKVSDTVSSEIGKAYGKTTYLATTFKIVPRGTEGAMSLEGTLAGLLASFFLASVGCFLGQITPPEAAVCVLASQIANLGESIIGASFQDKEGFKWLNNDVVNVINISLGSIVAILMQQFILQNWVK.

A chloroplast-targeting transit peptide spans 1-65 (MATISSTLLL…SRADGATAAA (65 aa)). 6 helical membrane passes run 94 to 114 (LLIF…SGIA), 126 to 146 (AYGS…TAAT), 171 to 191 (VIGS…QVGG), 248 to 268 (TLAG…LGQI), 274 to 294 (AVCV…GASF), and 307 to 327 (VVNV…QQFI).

The protein belongs to the TMEM19 family.

It localises to the plastid. Its subcellular location is the chloroplast membrane. The catalysed reaction is phytyl phosphate + a ribonucleoside 5'-triphosphate = phytyl diphosphate + a ribonucleoside 5'-diphosphate. The enzyme catalyses phytyl phosphate + CTP = phytyl diphosphate + CDP. It functions in the pathway cofactor biosynthesis; tocopherol biosynthesis. Functionally, phytyl-phosphate kinase catalyzing the conversion of phytyl-monophosphate to phytyl-diphosphate. Involved in the activation and reutilization of phytol from chlorophyll degradation in plant metabolism, including tocopherol (vitamin E) biosynthesis. Involved in the biosynthesis of phylloquinone (vitamin K), which is required for the photosystem I (PSI) complex stability. This chain is Protein VTE6, chloroplastic, found in Arabidopsis thaliana (Mouse-ear cress).